The chain runs to 66 residues: Large ribosomal subunit protein bL35 (66 aa).

Belongs to the bacterial ribosomal protein bL35 family.

This Hyphomonas neptunium (strain ATCC 15444) protein is Large ribosomal subunit protein bL35.